We begin with the raw amino-acid sequence, 880 residues long: Alanine--tRNA ligase (880 aa).

H566, H570, C668, and H672 together coordinate Zn(2+).

Belongs to the class-II aminoacyl-tRNA synthetase family. It depends on Zn(2+) as a cofactor.

It is found in the cytoplasm. It catalyses the reaction tRNA(Ala) + L-alanine + ATP = L-alanyl-tRNA(Ala) + AMP + diphosphate. Catalyzes the attachment of alanine to tRNA(Ala) in a two-step reaction: alanine is first activated by ATP to form Ala-AMP and then transferred to the acceptor end of tRNA(Ala). Also edits incorrectly charged Ser-tRNA(Ala) and Gly-tRNA(Ala) via its editing domain. The chain is Alanine--tRNA ligase from Acetivibrio thermocellus (strain ATCC 27405 / DSM 1237 / JCM 9322 / NBRC 103400 / NCIMB 10682 / NRRL B-4536 / VPI 7372) (Clostridium thermocellum).